A 328-amino-acid chain; its full sequence is Formimidoylglutamase (328 aa).

Positions 133, 159, 161, 163, 253, and 255 each coordinate Mn(2+).

Belongs to the arginase family. Requires Mn(2+) as cofactor.

It carries out the reaction N-formimidoyl-L-glutamate + H2O = formamide + L-glutamate. Its pathway is amino-acid degradation; L-histidine degradation into L-glutamate; L-glutamate from N-formimidoyl-L-glutamate (hydrolase route): step 1/1. Its function is as follows. Catalyzes the conversion of N-formimidoyl-L-glutamate to L-glutamate and formamide. The protein is Formimidoylglutamase of Streptococcus pyogenes serotype M1.